The sequence spans 211 residues: Probable GTP-binding protein EngB (211 aa).

Positions 21-205 (LMATIVFVGR…KNRIYEIIRE (185 aa)) constitute an EngB-type G domain. Residues 29 to 36 (GRSNVGKS), 54 to 58 (GVTRK), 71 to 74 (DMPG), 151 to 154 (NKLD), and 184 to 186 (ISA) contribute to the GTP site. 2 residues coordinate Mg(2+): Ser36 and Thr56.

The protein belongs to the TRAFAC class TrmE-Era-EngA-EngB-Septin-like GTPase superfamily. EngB GTPase family. Mg(2+) serves as cofactor.

Its function is as follows. Necessary for normal cell division and for the maintenance of normal septation. This is Probable GTP-binding protein EngB from Pyrococcus abyssi (strain GE5 / Orsay).